The primary structure comprises 70 residues: MTTILLKENEPFEVAIRRFRRAIEKNGLIAELRERQSYEKPTTARKRKKAAAVKRLHKRLRSQMLPKKLH.

The protein belongs to the bacterial ribosomal protein bS21 family.

The protein is Small ribosomal subunit protein bS21A of Paraburkholderia xenovorans (strain LB400).